The primary structure comprises 245 residues: Octanoyltransferase (245 aa).

Residues 54–238 form the BPL/LPL catalytic domain; sequence GEATELVWLL…AFENIFGETR (185 aa). Residues 92-99, 167-169, and 180-182 each bind substrate; these read RGGQLTYH, AIG, and GIA. C198 functions as the Acyl-thioester intermediate in the catalytic mechanism.

The protein belongs to the LipB family.

The protein resides in the cytoplasm. It catalyses the reaction octanoyl-[ACP] + L-lysyl-[protein] = N(6)-octanoyl-L-lysyl-[protein] + holo-[ACP] + H(+). Its pathway is protein modification; protein lipoylation via endogenous pathway; protein N(6)-(lipoyl)lysine from octanoyl-[acyl-carrier-protein]: step 1/2. Catalyzes the transfer of endogenously produced octanoic acid from octanoyl-acyl-carrier-protein onto the lipoyl domains of lipoate-dependent enzymes. Lipoyl-ACP can also act as a substrate although octanoyl-ACP is likely to be the physiological substrate. In Rhodopseudomonas palustris (strain ATCC BAA-98 / CGA009), this protein is Octanoyltransferase.